The primary structure comprises 213 residues: Nucleolar protein 12 (213 aa).

Positions 33-96 (GFHKRKVERK…RLVTAKTESV (64 aa)) form a coiled coil. Positions 109–213 (TISDLDLSGA…LTGKAQHSRE (105 aa)) are disordered. Positions 130 to 139 (AGDESEEEAS) are enriched in acidic residues. Basic residues predominate over residues 170 to 182 (AHSRKKVKRKHPR).

This sequence belongs to the RRP17 family. Interacts with KIAA1191.

The protein localises to the nucleus. It is found in the nucleolus. The protein resides in the cytoplasm. Multifunctional RNA binding protein that plays a role in RNA metabolism and DNA maintenance. Participates in the resolution of DNA stress and the maintenance of genome integrity by localizing to sites of DNA insults. Also plays a role in proper nucleolar organization by limiting nucleolar size and regulating nucleolar number. Mechanistically, regulates the nucleolar levels of fibrillarin and nucleolin, two key players in pre-rRNA processing and ribosome assembly. In Pongo abelii (Sumatran orangutan), this protein is Nucleolar protein 12 (NOL12).